The primary structure comprises 311 residues: Retron Ec78 reverse transcriptase (311 aa).

Residues 15-241 (DSGISAFLVT…HNRHVTGVTI (227 aa)) enclose the Reverse transcriptase domain. Positions 96, 187, and 188 each coordinate Mg(2+).

Belongs to the bacterial reverse transcriptase family.

The catalysed reaction is DNA(n) + a 2'-deoxyribonucleoside 5'-triphosphate = DNA(n+1) + diphosphate. Reverse transcriptase (RT) component of antiviral defense system retron Ec78, composed of a non-coding RNA (ncRNA), this reverse transcriptase (RT), a probable ATPase and a putative HNH endonuclease. Expression of retron Ec78 confers protection against bacteriophage T5. At multiplicity of infection (MOI) of 0.02 cultures slow growth when infected with T5 but do not collapse, at MOI 2 cultures enter growth stasis. Responsible for synthesis of msDNA-Ec78 (a linear ssDNA with a 5'-terminal phosphate residue). Unlike most known msDNAs the mature product does not have an RNA component. The retron transcript serves as primer and template for the reaction, and codes for the RT. Not mutagenic when cloned in E.coli. It is thought to be synthesized as a branched RNA with a 2',5'-phosphodiester linkage to ssDNA; the linkage is cleaved endonucleolytically by ExoVII (xseA-xseB) leaving the observed mature 5'-ssDNA terminus. Overexpression of the ncRNA and RT, which leads to increased levels of msDNA, is not mutagenic in vivo. As the stem in the msDNA does not have a mismatch it probably does not bind or sequester MutS and/or MutL. In Escherichia coli, this protein is Retron Ec78 reverse transcriptase.